The following is a 474-amino-acid chain: tRNA-2-methylthio-N(6)-dimethylallyladenosine synthase (474 aa).

Residues 3–120 (KKLHIKTWGC…LPEMINSVRG (118 aa)) form the MTTase N-terminal domain. C12, C49, C83, C157, C161, and C164 together coordinate [4Fe-4S] cluster. One can recognise a Radical SAM core domain in the interval 143-375 (RAEGPTAFVS…QERINQQAMA (233 aa)). The TRAM domain maps to 378 to 441 (RRMLGTTQRI…PNSLRGKVVR (64 aa)).

It belongs to the methylthiotransferase family. MiaB subfamily. As to quaternary structure, monomer. It depends on [4Fe-4S] cluster as a cofactor.

The protein resides in the cytoplasm. The enzyme catalyses N(6)-dimethylallyladenosine(37) in tRNA + (sulfur carrier)-SH + AH2 + 2 S-adenosyl-L-methionine = 2-methylsulfanyl-N(6)-dimethylallyladenosine(37) in tRNA + (sulfur carrier)-H + 5'-deoxyadenosine + L-methionine + A + S-adenosyl-L-homocysteine + 2 H(+). It carries out the reaction N(6)-dimethylallyladenosine(37) in tRNA + (sulfur carrier)-SH + AH2 + S-adenosyl-L-methionine = 2-thio-N(6)-dimethylallyladenosine(37) in tRNA + (sulfur carrier)-H + 5'-deoxyadenosine + L-methionine + A + H(+). The catalysed reaction is 2-thio-N(6)-dimethylallyladenosine(37) in tRNA + S-adenosyl-L-methionine = 2-methylsulfanyl-N(6)-dimethylallyladenosine(37) in tRNA + S-adenosyl-L-homocysteine + H(+). Functionally, catalyzes the methylthiolation of N6-(dimethylallyl)adenosine (i(6)A), leading to the formation of 2-methylthio-N6-(dimethylallyl)adenosine (ms(2)i(6)A) at position 37 in tRNAs that read codons beginning with uridine. The chain is tRNA-2-methylthio-N(6)-dimethylallyladenosine synthase from Salmonella typhimurium (strain LT2 / SGSC1412 / ATCC 700720).